The primary structure comprises 181 residues: Acireductone dioxygenase (181 aa).

Fe(2+)-binding residues include His-97, His-99, Glu-103, and His-141. The Ni(2+) site is built by His-97, His-99, Glu-103, and His-141.

It belongs to the acireductone dioxygenase (ARD) family. Monomer. Requires Fe(2+) as cofactor. It depends on Ni(2+) as a cofactor.

It catalyses the reaction 1,2-dihydroxy-5-(methylsulfanyl)pent-1-en-3-one + O2 = 3-(methylsulfanyl)propanoate + CO + formate + 2 H(+). It carries out the reaction 1,2-dihydroxy-5-(methylsulfanyl)pent-1-en-3-one + O2 = 4-methylsulfanyl-2-oxobutanoate + formate + 2 H(+). It participates in amino-acid biosynthesis; L-methionine biosynthesis via salvage pathway; L-methionine from S-methyl-5-thio-alpha-D-ribose 1-phosphate: step 5/6. Its function is as follows. Catalyzes 2 different reactions between oxygen and the acireductone 1,2-dihydroxy-3-keto-5-methylthiopentene (DHK-MTPene) depending upon the metal bound in the active site. Fe-containing acireductone dioxygenase (Fe-ARD) produces formate and 2-keto-4-methylthiobutyrate (KMTB), the alpha-ketoacid precursor of methionine in the methionine recycle pathway. Ni-containing acireductone dioxygenase (Ni-ARD) produces methylthiopropionate, carbon monoxide and formate, and does not lie on the methionine recycle pathway. This chain is Acireductone dioxygenase, found in Pseudomonas savastanoi pv. phaseolicola (strain 1448A / Race 6) (Pseudomonas syringae pv. phaseolicola (strain 1448A / Race 6)).